The following is a 553-amino-acid chain: ATP synthase F(1) complex subunit alpha, mitochondrial (553 aa).

A mitochondrion-targeting transit peptide spans 1-43 (MLSVRVAAAVVRALPRRAGLVSRNALGSSFIAARNFHASNTHL). S53 and S65 each carry phosphoserine. S76 is subject to Phosphoserine; alternate. S76 carries O-linked (GlcNAc) serine; alternate glycosylation. S106 is subject to Phosphoserine. Residues K123, K126, and K132 each carry the N6-acetyllysine modification. T134 bears the Phosphothreonine mark. N6-acetyllysine; alternate is present on K161. K161 carries the post-translational modification N6-succinyllysine; alternate. S166 is subject to Phosphoserine. K167 is subject to N6-acetyllysine; alternate. Position 167 is an N6-succinyllysine; alternate (K167). S184 is modified (phosphoserine). R204 carries the post-translational modification Omega-N-methylarginine. ATP contacts are provided by Q215, G217, K218, T219, and S220. T219 is a binding site for Mg(2+). 2 positions are modified to N6-acetyllysine; alternate: K230 and K239. 2 positions are modified to N6-succinyllysine; alternate: K230 and K239. K240 carries the N6-acetyllysine modification. N6-acetyllysine; alternate is present on residues K261 and K305. 2 positions are modified to N6-succinyllysine; alternate: K261 and K305. A Mg(2+)-binding site is contributed by D312. K427 bears the N6-acetyllysine; alternate mark. K427 is modified (N6-succinyllysine; alternate). K434 is modified (N6-acetyllysine). Positions 473 and 475 each coordinate ATP. An N6-acetyllysine; alternate mark is found at K498, K506, K531, and K539. N6-succinyllysine; alternate is present on residues K498, K506, K531, and K539. K541 carries the post-translational modification N6-acetyllysine.

The protein belongs to the ATPase alpha/beta chains family. In terms of assembly, homotrimer. Component of the ATP synthase complex composed at least of ATP5F1A/subunit alpha, ATP5F1B/subunit beta, ATP5MC1/subunit c (homooctomer), MT-ATP6/subunit a, MT-ATP8/subunit 8, ATP5ME/subunit e, ATP5MF/subunit f, ATP5MG/subunit g, ATP5MK/subunit k, ATP5MJ/subunit j, ATP5F1C/subunit gamma, ATP5F1D/subunit delta, ATP5F1E/subunit epsilon, ATP5PF/subunit F6, ATP5PB/subunit b, ATP5PD/subunit d, ATP5PO/subunit OSCP. ATP synthase complex consists of a soluble F(1) head domain (subunits alpha(3) and beta(3)) - the catalytic core - and a membrane F(0) domain - the membrane proton channel (subunits c, a, 8, e, f, g, k and j). These two domains are linked by a central stalk (subunits gamma, delta, and epsilon) rotating inside the F1 region and a stationary peripheral stalk (subunits F6, b, d, and OSCP). Interacts with ATPAF2. Interacts with HRG; the interaction occurs on the surface of T-cells and alters the cell morphology when associated with concanavalin (in vitro). Interacts with PLG (angiostatin peptide); the interaction inhibits most of the angiogenic properties of angiostatin. Interacts with BLOC1S1. Interacts with BCL2L1 isoform BCL-X(L); the interaction mediates the association of BCL2L1 isoform BCL-X(L) with the mitochondrial membrane F(1)F(0) ATP synthase and enhances neurons metabolic efficiency. Interacts with CLN5 and PPT1. Interacts with S100A1; this interaction increases F1-ATPase activity. Interacts with ABCB7; this interaction allows the regulation of cellular iron homeostasis and cellular reactive oxygen species (ROS) levels in cardiomyocytes. Post-translationally, acetylated on lysine residues. BLOC1S1 is required for acetylation.

The protein resides in the mitochondrion inner membrane. Its subcellular location is the cell membrane. Its function is as follows. Subunit alpha, of the mitochondrial membrane ATP synthase complex (F(1)F(0) ATP synthase or Complex V) that produces ATP from ADP in the presence of a proton gradient across the membrane which is generated by electron transport complexes of the respiratory chain. ATP synthase complex consist of a soluble F(1) head domain - the catalytic core - and a membrane F(1) domain - the membrane proton channel. These two domains are linked by a central stalk rotating inside the F(1) region and a stationary peripheral stalk. During catalysis, ATP synthesis in the catalytic domain of F(1) is coupled via a rotary mechanism of the central stalk subunits to proton translocation. In vivo, can only synthesize ATP although its ATP hydrolase activity can be activated artificially in vitro. With the catalytic subunit beta (ATP5F1B), forms the catalytic core in the F(1) domain. Subunit alpha does not bear the catalytic high-affinity ATP-binding sites. The polypeptide is ATP synthase F(1) complex subunit alpha, mitochondrial (Pongo abelii (Sumatran orangutan)).